Consider the following 208-residue polypeptide: MVLSGKDLTAYRNEDVLFQGLSFCLFPQQLMTITGPNGIGKSTLLRIIAGLFKAAEGHVSLKDQEQIYPVATACHYLGPQNAMKPFLSVIDNLQFWSAFYGQPLHSPHEVLADIGLSDLEHVPFNVLSTGQKRRIAIARLLLSYRPVWILDEPISGIDSYAQTLLTNIFQYHLNQGGMIIAATHSPLGIPENHKITLEKFLPPQEKIQ.

The ABC transporter domain maps to 3 to 206 (LSGKDLTAYR…LEKFLPPQEK (204 aa)). 35–42 (GPNGIGKS) provides a ligand contact to ATP.

The protein belongs to the ABC transporter superfamily. CcmA exporter (TC 3.A.1.107) family. The complex is composed of two ATP-binding proteins (CcmA) and two transmembrane proteins (CcmB).

The protein resides in the cell inner membrane. The enzyme catalyses heme b(in) + ATP + H2O = heme b(out) + ADP + phosphate + H(+). In terms of biological role, part of the ABC transporter complex CcmAB involved in the biogenesis of c-type cytochromes; once thought to export heme, this seems not to be the case, but its exact role is uncertain. Responsible for energy coupling to the transport system. The chain is Cytochrome c biogenesis ATP-binding export protein CcmA from Bartonella henselae (strain ATCC 49882 / DSM 28221 / CCUG 30454 / Houston 1) (Rochalimaea henselae).